A 275-amino-acid chain; its full sequence is Large ribosomal subunit protein uL2 (275 aa).

Positions 221-275 are disordered; it reads RGMTMNPVDHPMGGGEGRSKGHIPQSPWGIPAKGYKTRKSKKPSDKLIVKRRKQK.

It belongs to the universal ribosomal protein uL2 family. In terms of assembly, part of the 50S ribosomal subunit. Forms a bridge to the 30S subunit in the 70S ribosome.

In terms of biological role, one of the primary rRNA binding proteins. Required for association of the 30S and 50S subunits to form the 70S ribosome, for tRNA binding and peptide bond formation. It has been suggested to have peptidyltransferase activity; this is somewhat controversial. Makes several contacts with the 16S rRNA in the 70S ribosome. This chain is Large ribosomal subunit protein uL2, found in Kosmotoga olearia (strain ATCC BAA-1733 / DSM 21960 / TBF 19.5.1).